Reading from the N-terminus, the 184-residue chain is Large ribosomal subunit protein uL5 (184 aa).

The protein belongs to the universal ribosomal protein uL5 family. As to quaternary structure, part of the 50S ribosomal subunit; part of the 5S rRNA/L5/L18/L25 subcomplex. Contacts the 5S rRNA and the P site tRNA. Forms a bridge to the 30S subunit in the 70S ribosome.

In terms of biological role, this is one of the proteins that bind and probably mediate the attachment of the 5S RNA into the large ribosomal subunit, where it forms part of the central protuberance. In the 70S ribosome it contacts protein S13 of the 30S subunit (bridge B1b), connecting the 2 subunits; this bridge is implicated in subunit movement. Contacts the P site tRNA; the 5S rRNA and some of its associated proteins might help stabilize positioning of ribosome-bound tRNAs. The sequence is that of Large ribosomal subunit protein uL5 from Syntrophotalea carbinolica (strain DSM 2380 / NBRC 103641 / GraBd1) (Pelobacter carbinolicus).